Consider the following 227-residue polypeptide: Ribonuclease 3 (227 aa).

Positions 4–133 (FETLEKLLGY…LIAAIYLDSN (130 aa)) constitute an RNase III domain. Glutamate 46 provides a ligand contact to Mg(2+). Aspartate 50 is a catalytic residue. Residues asparagine 119 and glutamate 122 each coordinate Mg(2+). Glutamate 122 is an active-site residue. Residues 158-226 (DPKTALQEWA…ARDLLHRLQD (69 aa)) form the DRBM domain.

This sequence belongs to the ribonuclease III family. In terms of assembly, homodimer. Mg(2+) is required as a cofactor.

The protein localises to the cytoplasm. It catalyses the reaction Endonucleolytic cleavage to 5'-phosphomonoester.. Digests double-stranded RNA. Involved in the processing of primary rRNA transcript to yield the immediate precursors to the large and small rRNAs (23S and 16S). Processes some mRNAs, and tRNAs when they are encoded in the rRNA operon. Processes pre-crRNA and tracrRNA of type II CRISPR loci if present in the organism. This chain is Ribonuclease 3, found in Rickettsia akari (strain Hartford).